Here is a 187-residue protein sequence, read N- to C-terminus: Putative adenylate kinase (187 aa).

The ATP site is built by Gly10, Gly12, Lys13, Thr14, and Ile15. Residues 30-53 (SLSQFVIENKLYTEYDELRQSYII) form an NMP region. Residues 103–113 (GRGWADIKVAE) are LID. Arg104 is a binding site for ATP.

The protein belongs to the adenylate kinase family. AK6 subfamily. As to quaternary structure, interacts with uS11. Not a structural component of 40S pre-ribosomes, but transiently interacts with them by binding to uS11.

It catalyses the reaction AMP + ATP = 2 ADP. The catalysed reaction is ATP + H2O = ADP + phosphate + H(+). Functionally, broad-specificity nucleoside monophosphate (NMP) kinase that catalyzes the reversible transfer of the terminal phosphate group between nucleoside triphosphates and monophosphates. Also has ATPase activity. Involved in the late maturation steps of the 30S ribosomal particles, specifically 16S rRNA maturation. While NMP activity is not required for ribosome maturation, ATPase activity is. Associates transiently with small ribosomal subunit protein uS11. ATP hydrolysis breaks the interaction with uS11. May temporarily remove uS11 from the ribosome to enable a conformational change of the ribosomal RNA that is needed for the final maturation step of the small ribosomal subunit. The protein is Putative adenylate kinase of Saccharolobus islandicus (strain L.S.2.15 / Lassen #1) (Sulfolobus islandicus).